A 330-amino-acid polypeptide reads, in one-letter code: Phenylalanine--tRNA ligase alpha subunit (330 aa).

Glu255 lines the Mg(2+) pocket.

Belongs to the class-II aminoacyl-tRNA synthetase family. Phe-tRNA synthetase alpha subunit type 1 subfamily. Tetramer of two alpha and two beta subunits. Mg(2+) serves as cofactor.

The protein localises to the cytoplasm. The catalysed reaction is tRNA(Phe) + L-phenylalanine + ATP = L-phenylalanyl-tRNA(Phe) + AMP + diphosphate + H(+). In Acinetobacter baumannii (strain SDF), this protein is Phenylalanine--tRNA ligase alpha subunit.